A 108-amino-acid polypeptide reads, in one-letter code: Replication restart protein PriB (108 aa).

In terms of domain architecture, SSB spans 11–108; it reads INRNQVIISG…VLHVRDTRII (98 aa).

This sequence belongs to the PriB family. As to quaternary structure, homodimer. Interacts with PriA and DnaT. Component of the replication restart primosome. Primosome assembly occurs via a 'hand-off' mechanism. PriA binds to replication forks, subsequently PriB then DnaT bind; DnaT then displaces ssDNA to generate the helicase loading substrate.

Functionally, involved in the restart of stalled replication forks, which reloads the replicative helicase on sites other than the origin of replication; the PriA-PriB pathway is the major replication restart pathway. During primosome assembly it facilitates complex formation between PriA and DnaT on DNA; stabilizes PriA on DNA. Stimulates the DNA unwinding activity of PriA helicase. The sequence is that of Replication restart protein PriB from Nitrosomonas europaea (strain ATCC 19718 / CIP 103999 / KCTC 2705 / NBRC 14298).